A 206-amino-acid chain; its full sequence is Nucleoside triphosphate pyrophosphatase (206 aa).

Aspartate 71 serves as the catalytic Proton acceptor.

This sequence belongs to the Maf family. Requires a divalent metal cation as cofactor.

It localises to the cytoplasm. It carries out the reaction a ribonucleoside 5'-triphosphate + H2O = a ribonucleoside 5'-phosphate + diphosphate + H(+). The enzyme catalyses a 2'-deoxyribonucleoside 5'-triphosphate + H2O = a 2'-deoxyribonucleoside 5'-phosphate + diphosphate + H(+). Its function is as follows. Nucleoside triphosphate pyrophosphatase. May have a dual role in cell division arrest and in preventing the incorporation of modified nucleotides into cellular nucleic acids. In Rippkaea orientalis (strain PCC 8801 / RF-1) (Cyanothece sp. (strain PCC 8801)), this protein is Nucleoside triphosphate pyrophosphatase.